A 226-amino-acid polypeptide reads, in one-letter code: Isoprenyl transferase (226 aa).

Asp12 is a catalytic residue. A Mg(2+)-binding site is contributed by Asp12. Substrate is bound by residues Gly13–Arg16, Trp17, Lys25, His29, and Ser57–Glu59. The active-site Proton acceptor is Asn60. Residues Trp61, Arg63, Arg174, and Arg180–Ser182 each bind substrate. Glu193 is a Mg(2+) binding site.

This sequence belongs to the UPP synthase family. As to quaternary structure, homodimer. Requires Mg(2+) as cofactor.

Its function is as follows. Catalyzes the condensation of isopentenyl diphosphate (IPP) with allylic pyrophosphates generating different type of terpenoids. This chain is Isoprenyl transferase, found in Rickettsia typhi (strain ATCC VR-144 / Wilmington).